The primary structure comprises 1505 residues: ABC transporter C family member 13 (1505 aa).

Helical transmembrane passes span 11-31, 54-68, 71-91, 102-122, 131-151, 171-191, 313-333, 336-356, 367-387, 421-441, 447-467, and 534-554; these read EAAA…LLLL, AVDG…VGAW, AALA…SYEV, ALLL…LAMQ, FPVL…GIAY, MVAN…GVMG, AFAA…SYFV, LSGK…FFVA, WYLG…AMVY, AWYF…LAIL, IAMV…VPVA, and FVFW…CILL. The region spanning 314-589 is the ABC transmembrane type-1 1 domain; that stretch reads FAAVNTIVSY…FPDLISMIAQ (276 aa). One can recognise an ABC transporter 1 domain in the interval 623-846; it reads ININDATFSW…GTDFNALVCA (224 aa). 658-665 contributes to the ATP binding site; the sequence is GVIGSGKS. The segment covering 881 to 897 has biased composition (polar residues); that stretch reads DNLKNKVSNNEKPSSTR. A disordered region spans residues 881 to 919; that stretch reads DNLKNKVSNNEKPSSTRGIKEKKKKPEERKKKRSVQEEE. Positions 904–919 are enriched in basic and acidic residues; it reads KKPEERKKKRSVQEEE. A run of 6 helical transmembrane segments spans residues 940 to 960, 980 to 1000, 1055 to 1077, 1081 to 1103, 1149 to 1169, and 1174 to 1194; these read GTLI…QIAS, SVVL…FVFV, IAFR…AVMS, WQVL…YYIA, LLDC…WLCL, and LSTF…PGTI. Residues 945 to 1215 enclose the ABC transmembrane type-1 2 domain; that stretch reads LIILAQTMFQ…GLNLNARMSR (271 aa). The ABC transporter 2 domain maps to 1262-1496; that stretch reads IELVDLKVRY…KSSMFMQLVS (235 aa). 1296-1303 serves as a coordination point for ATP; it reads GRTGSGKS.

Belongs to the ABC transporter superfamily. ABCC family. Conjugate transporter (TC 3.A.1.208) subfamily.

It is found in the membrane. Its function is as follows. ABC transporter that may affect phytic acid transport and compartmentalization. May function directly or indirectly in removing phytic acid from the cytosol or in vesicle trafficking. Required for phytic acid accumulation in developing seeds. Phytic acid is the primary storage form of phosphorus in cereal grains and other plant seeds. This is ABC transporter C family member 13 from Oryza sativa subsp. indica (Rice).